The chain runs to 198 residues: Guanylate kinase (198 aa).

The Guanylate kinase-like domain maps to 4-186; sequence PRPVVLSGPS…AYATLKQALS (183 aa). 14-19 is a binding site for ATP; it reads GAGKST. 37 to 51 contacts substrate; that stretch reads SHTTRNPRPGEEDGK. Residues Arg44, Arg137, and Arg148 contribute to the active site. 171–172 is a binding site for ATP; that stretch reads ND.

This sequence belongs to the guanylate kinase family. In terms of assembly, monomer. Interacts with RD3. Widely expressed. In retina is expressed in inner segment, outer nuclear layer, outer plexiform layer, inner plexiform layer, and ganglion cell layer (at protein level).

Its subcellular location is the photoreceptor inner segment. It is found in the cytoplasm. It localises to the cytosol. The protein resides in the mitochondrion. It carries out the reaction GMP + ATP = GDP + ADP. Functionally, catalyzes the phosphorylation of GMP to GDP. Essential enzyme for recycling GMP and indirectly, cyclic GMP (cGMP). Involved in the cGMP metabolism in photoreceptors. This is Guanylate kinase from Mus musculus (Mouse).